A 131-amino-acid chain; its full sequence is (R)-mandelonitrile lyase (131 aa).

The 63-residue stretch at 42-104 (VTFEPGARTA…WHGAAPTTAM (63 aa)) folds into the Cupin type-2 domain. Mn(2+) is bound by residues histidine 53, histidine 55, glutamine 59, histidine 94, and histidine 96.

This sequence belongs to the cupin domain-containing hydroxynitrile lyase family. The cofactor is Mn(2+).

The enzyme catalyses (R)-mandelonitrile = benzaldehyde + hydrogen cyanide. In terms of biological role, hydroxynitrile lyase which catalyzes mandelonitrile formation from benzaldehyde and hydrogen cyanide with high stereoselectivity in presence of manganese. This is (R)-mandelonitrile lyase from Granulicella tundricola (strain ATCC BAA-1859 / DSM 23138 / MP5ACTX9).